The following is a 340-amino-acid chain: KRR1 small subunit processome component homolog (340 aa).

The KH domain maps to 124 to 192 (DIIKIGNLVH…VRDIVLETMN (69 aa)). The span at 228 to 244 (KNKNISKRKQPKSKKPK) shows a compositional bias: basic residues. 2 disordered regions span residues 228 to 259 (KNKN…ESKI) and 271 to 324 (NQEQ…KVDV). Residues 269 to 302 (FLNQEQKQAKRNQERSAKQADAAKKQDERRNKDF) adopt a coiled-coil conformation. Composition is skewed to basic and acidic residues over residues 275-301 (KQAK…RNKD) and 309-324 (APSR…KVDV).

Belongs to the KRR1 family. In terms of assembly, monomer. Component of the ribosomal small subunit (SSU) processome.

The protein localises to the nucleus. It is found in the nucleolus. Functionally, required for 40S ribosome biogenesis. Involved in nucleolar processing of pre-18S ribosomal RNA and ribosome assembly. Binds to RNA. Required for female germline development, cell viability during eye development and for survival of dividing cells and epithelial cells during early wing disk development. This is KRR1 small subunit processome component homolog from Drosophila persimilis (Fruit fly).